Consider the following 634-residue polypeptide: DNA-directed RNA polymerase subunit gamma (634 aa).

Residues C74, C76, C89, and C92 each coordinate Zn(2+). Positions 471, 473, and 475 each coordinate Mg(2+).

This sequence belongs to the RNA polymerase beta' chain family. RpoC1 subfamily. As to quaternary structure, in cyanobacteria the RNAP catalytic core is composed of 2 alpha, 1 beta, 1 beta', 1 gamma and 1 omega subunit. When a sigma factor is associated with the core the holoenzyme is formed, which can initiate transcription. The cofactor is Mg(2+). Zn(2+) serves as cofactor.

It catalyses the reaction RNA(n) + a ribonucleoside 5'-triphosphate = RNA(n+1) + diphosphate. Its function is as follows. DNA-dependent RNA polymerase catalyzes the transcription of DNA into RNA using the four ribonucleoside triphosphates as substrates. This chain is DNA-directed RNA polymerase subunit gamma, found in Prochlorococcus marinus (strain AS9601).